The chain runs to 441 residues: Double-stranded RNA-binding protein 1 (441 aa).

3 consecutive DRBM domains span residues 1–71 (MYKS…HLSS), 86–155 (SYKS…SLPQ), and 169–237 (SYKN…HFED). A disordered region spans residues 69–88 (LSSLPLPPPPPPSENQSSYK).

Binds double-stranded RNA. The polypeptide is Double-stranded RNA-binding protein 1 (DRB1) (Oryza sativa subsp. japonica (Rice)).